The sequence spans 139 residues: uncharacterized protein (139 aa).

It to E.coli YebE.

This is an uncharacterized protein from Yersinia enterocolitica.